Here is a 924-residue protein sequence, read N- to C-terminus: Probable dipeptidyl-aminopeptidase B (924 aa).

Polar residues predominate over residues 1 to 12 (MPSTYSDDNTLR). Residues 1–102 (MPSTYSDDNT…RSNQRSSADG (102 aa)) form a disordered region. Over 1 to 111 (MPSTYSDDNT…GQRMDRSLRR (111 aa)) the chain is Cytoplasmic. A compositionally biased stretch (basic and acidic residues) spans 14 to 23 (GLDRFRDHSP). The span at 31 to 43 (SQETDSTVSTTSI) shows a compositional bias: polar residues. Positions 47–58 (RIQERLDTKEFP) are enriched in basic and acidic residues. Over residues 87 to 100 (NASPSSRSNQRSSA) the composition is skewed to low complexity. The helical; Signal-anchor for type II membrane protein transmembrane segment at 112–132 (WLFIVSGALVATWVIGLIFFV) threads the bilayer. At 133-924 (SSKAYKPSSS…GMKRRALPTA (792 aa)) the chain is on the vacuolar side. Residues Asn231 and Asn364 are each glycosylated (N-linked (GlcNAc...) asparagine). Ser768 acts as the Charge relay system in catalysis. A glycan (N-linked (GlcNAc...) asparagine) is linked at Asn827. Active-site charge relay system residues include Asp845 and His878.

The protein belongs to the peptidase S9B family.

The protein localises to the vacuole membrane. The enzyme catalyses Release of an N-terminal dipeptide, Xaa-Yaa-|-Zaa-, from a polypeptide, preferentially when Yaa is Pro, provided Zaa is neither Pro nor hydroxyproline.. Its function is as follows. Type IV dipeptidyl-peptidase which removes N-terminal dipeptides sequentially from polypeptides having unsubstituted N-termini provided that the penultimate residue is proline. The chain is Probable dipeptidyl-aminopeptidase B (dapB) from Neurospora crassa (strain ATCC 24698 / 74-OR23-1A / CBS 708.71 / DSM 1257 / FGSC 987).